Consider the following 73-residue polypeptide: Toxin Td12 (73 aa).

An N-terminal signal peptide occupies residues 1 to 7 (IGMVIEC). Positions 8–70 (KDGYLMEPNG…TWDRATNTCG (63 aa)) constitute an LCN-type CS-alpha/beta domain. 4 disulfides stabilise this stretch: C18–C69, C22–C44, C30–C50, and C34–C52. R71 carries the post-translational modification Arginine amide.

It belongs to the long (4 C-C) scorpion toxin superfamily. Sodium channel inhibitor family. Beta subfamily. Expressed by the venom gland.

Its subcellular location is the secreted. Functionally, beta toxins bind voltage-independently at site-4 of sodium channels (Nav) and shift the voltage of activation toward more negative potentials thereby affecting sodium channel activation and promoting spontaneous and repetitive firing. The protein is Toxin Td12 of Tityus discrepans (Venezuelan scorpion).